The following is a 597-amino-acid chain: MELSSGVCPATRLQEAEKAAVHKRSPKVLEALRKLNIQADQAPVIAVLGSGGGLRAHIACLGVLSELKELGLLDAVTYLAGVSGSTWALSSLYTKNGNMEGIEEELKHRYEKNEWDFHESLEKAIQASKRENYSLTDFWAYLIVSRQIRELQDSNLSSLKKQVEEGVLPYPIFAAIDEDLLADWRERKTQNSWFEFTPHHAGYPALGAYVPITEFGSRFENGKLVKSEPERDLTFLRGLWGSAFADIKEIKNYILNYFRNPFGKLKFIEGPVTYSEAPRMNVDAMLLDLVMAYFTDMNDPSIKDKLCALQQALGTETDEFGIEMAEIIQNWNETSAEKKEQFLDHLLDRFKKTQEDTTTYSLMNWNTGLVWDRCVFVNETRKCVSKWQWGTVYNFLYKHGKIADETMCSRELLHLVDAGFAINTPYPLVLPPVRETHLILSFDFSAGDPLETIRATADYCQRHEIPFPEVSEDQLKEWAKAPASCYVLRGETGPVVMHFTLFNKDNCGDDIETWRKKYGTVKLSDSYTPDLVRDLLRVSKENVKKNKINILSEMRKVAGNPGNIPRVNKEACLGDRVKDPQGSQTVEFKKSHNISKD.

The PLA2c domain occupies 1–597 (MELSSGVCPA…FKKSHNISKD (597 aa)). Ser83 acts as the Nucleophile in catalysis. The active-site Proton acceptor is Asp417. A disordered region spans residues 576-597 (RVKDPQGSQTVEFKKSHNISKD). Basic and acidic residues predominate over residues 587-597 (EFKKSHNISKD).

As to expression, highly expressed in ovary, where it localizes to oocytes in preantral and antral stage follicles (at protein level). Not detected in other tissues tested.

Its subcellular location is the nucleus. It localises to the nucleoplasm. The protein localises to the nucleus envelope. The protein resides in the cytoplasm. It is found in the cell cortex. Its subcellular location is the cytoskeleton. It localises to the spindle. It carries out the reaction a 1,2-diacyl-sn-glycero-3-phosphocholine + H2O = a 1-acyl-sn-glycero-3-phosphocholine + a fatty acid + H(+). It catalyses the reaction a 1-O-alkyl-2-acyl-sn-glycero-3-phosphocholine + H2O = a 1-O-alkyl-sn-glycero-3-phosphocholine + a fatty acid + H(+). The catalysed reaction is 1,2-dihexadecanoyl-sn-glycero-3-phosphocholine + H2O = 1-hexadecanoyl-sn-glycero-3-phosphocholine + hexadecanoate + H(+). The enzyme catalyses 1-hexadecanoyl-2-(9Z-octadecenoyl)-sn-glycero-3-phosphocholine + H2O = 1-hexadecanoyl-sn-glycero-3-phosphocholine + (9Z)-octadecenoate + H(+). It carries out the reaction 1-hexadecanoyl-2-(9Z,12Z-octadecadienoyl)-sn-glycero-3-phosphocholine + H2O = (9Z,12Z)-octadecadienoate + 1-hexadecanoyl-sn-glycero-3-phosphocholine + H(+). It catalyses the reaction 1-hexadecanoyl-2-(5Z,8Z,11Z,14Z-eicosatetraenoyl)-sn-glycero-3-phosphocholine + H2O = 1-hexadecanoyl-sn-glycero-3-phosphocholine + (5Z,8Z,11Z,14Z)-eicosatetraenoate + H(+). The catalysed reaction is 1-O-hexadecyl-2-(5Z,8Z,11Z,14Z)-eicosatetraenoyl-sn-glycero-3-phosphocholine + H2O = 1-O-hexadecyl-sn-glycero-3-phosphocholine + (5Z,8Z,11Z,14Z)-eicosatetraenoate + H(+). The enzyme catalyses 1-hexadecanoyl-2-(5Z,8Z,11Z,14Z-eicosatetraenoyl)-sn-glycero-3-phosphocholine + H2O = 2-(5Z,8Z,11Z,14Z)-eicosatetraenoyl-sn-glycero-3-phosphocholine + hexadecanoate + H(+). It carries out the reaction a 1-acyl-sn-glycero-3-phosphocholine + H2O = sn-glycerol 3-phosphocholine + a fatty acid + H(+). It catalyses the reaction 1-hexadecanoyl-sn-glycero-3-phosphocholine + H2O = sn-glycerol 3-phosphocholine + hexadecanoate + H(+). The catalysed reaction is 2 1-hexadecanoyl-sn-glycero-3-phosphocholine = 1,2-dihexadecanoyl-sn-glycero-3-phosphocholine + sn-glycerol 3-phosphocholine. The enzyme catalyses 1-hexadecanoyl-sn-glycero-3-phosphoethanolamine + 1-hexadecanoyl-sn-glycero-3-phosphocholine = 1,2-dihexadecanoyl-sn-glycero-3-phosphoethanolamine + sn-glycerol 3-phosphocholine. It carries out the reaction 1-hexadecanoyl-sn-glycero-3-phosphoethanolamine + 1-hexadecanoyl-sn-glycero-3-phosphocholine = sn-glycero-3-phosphoethanolamine + 1,2-dihexadecanoyl-sn-glycero-3-phosphocholine. It catalyses the reaction 2 1-hexadecanoyl-sn-glycero-3-phosphoethanolamine = 1,2-dihexadecanoyl-sn-glycero-3-phosphoethanolamine + sn-glycero-3-phosphoethanolamine. The catalysed reaction is 1-O-hexadecyl-sn-glycero-3-phosphocholine + 1-hexadecanoyl-sn-glycero-3-phosphocholine = 1-O-hexadecyl-2-hexadecanoyl-sn-glycero-3-phosphocholine + sn-glycerol 3-phosphocholine. The enzyme catalyses a 1-O-(1Z-alkenyl)-sn-glycero-3-phosphoethanolamine + 1-hexadecanoyl-sn-glycero-3-phosphocholine = 1-O-(1Z)-alkenyl-2-hexadecanoyl-sn-glycero-3-phosphoethanolamine + sn-glycerol 3-phosphocholine. It carries out the reaction 1-O-hexadecyl-sn-glycero-3-phosphocholine + 1-hexadecanoyl-sn-glycero-3-phosphoethanolamine = 1-O-hexadecyl-2-hexadecanoyl-sn-glycero-3-phosphocholine + sn-glycero-3-phosphoethanolamine. It catalyses the reaction 1-octadecanoyl-2-(5Z,8Z,11Z,14Z)-eicosatetraenoyl-sn-glycero-3-phosphoethanolamine + 1-hexadecanoyl-sn-glycero-3-phosphocholine = 1-octadecanoyl-sn-glycero-3-phosphoethanolamine + 1-hexadecanoyl-2-(5Z,8Z,11Z,14Z-eicosatetraenoyl)-sn-glycero-3-phosphocholine. The catalysed reaction is 1-octadecanoyl-2-(5Z,8Z,11Z,14Z)-eicosatetraenoyl-sn-glycero-3-phosphoethanolamine + 1-O-hexadecyl-sn-glycero-3-phosphocholine = 1-octadecanoyl-sn-glycero-3-phosphoethanolamine + 1-O-hexadecyl-2-(5Z,8Z,11Z,14Z)-eicosatetraenoyl-sn-glycero-3-phosphocholine. The enzyme catalyses 1-hexadecanoyl-2-(9Z,12Z-octadecadienoyl)-sn-glycero-3-phosphocholine + a 1-O-(1Z-alkenyl)-sn-glycero-3-phosphoethanolamine = 1-O-(1Z-alkenyl)-2-(9Z,12Z-octadecadienoyl)-sn-glycero-3-phosphoethanolamine + 1-hexadecanoyl-sn-glycero-3-phosphocholine. It carries out the reaction 1-hexadecanoyl-2-(5Z,8Z,11Z,14Z-eicosatetraenoyl)-sn-glycero-3-phosphocholine + a 1-O-(1Z-alkenyl)-sn-glycero-3-phosphoethanolamine = 1-O-(1Z)-alkenyl-2-(5Z,8Z,11Z,14Z)-eicosatetraenoyl-sn-glycero-3-phosphoethanolamine + 1-hexadecanoyl-sn-glycero-3-phosphocholine. Calcium-independent phospholipase, lysophospholipase and O-acyltransferase involved in phospholipid remodeling. Preferentially hydrolyzes the ester bond of the fatty acyl group attached at sn-2 position of phospholipids with choline and ethanolamine head groups, producing lysophospholipids that are used in deacylation-reacylation cycles. Transfers the sn-1 fatty acyl from one lysophospholipid molecule to the sn-2 position of another lysophospholipid to form diacyl, alkylacyl and alkenylacyl glycerophospholipids. Cleaves ester bonds but not alkyl or alkenyl ether bonds at the sn-1 position of lysophospholipids. Catalyzes sn-2 fatty acyl transfer from phospholipids to the sn-2 position of 1-O-alkyl or 1-O-alkenyl lysophospholipids with lower efficiency. The protein is Cytosolic phospholipase A2 gamma of Mus musculus (Mouse).